The primary structure comprises 475 residues: Integrator complex subunit 15 (475 aa).

A disordered region spans residues Tyr-402–Pro-444. The span at His-416–His-430 shows a compositional bias: low complexity.

This sequence belongs to the Integrator subunit 15 family. Component of the Integrator complex, composed of core subunits INTS1, INTS2, INTS3, INTS4, INTS5, INTS6, INTS7, INTS8, INTS9/RC74, INTS10, INTS11/CPSF3L, INTS12, INTS13, INTS14 and INTS15. The core complex associates with protein phosphatase 2A subunits PPP2CA and PPP2R1A, to form the Integrator-PP2A (INTAC) complex. INTS15 is part of the tail subcomplex, composed of INTS10, INTS13, INTS14 and INTS15.

Its subcellular location is the nucleus. It localises to the chromosome. Its function is as follows. Component of the integrator complex, a multiprotein complex that terminates RNA polymerase II (Pol II) transcription in the promoter-proximal region of genes. The integrator complex provides a quality checkpoint during transcription elongation by driving premature transcription termination of transcripts that are unfavorably configured for transcriptional elongation: the complex terminates transcription by (1) catalyzing dephosphorylation of the C-terminal domain (CTD) of Pol II subunit POLR2A/RPB1 and SUPT5H/SPT5, (2) degrading the exiting nascent RNA transcript via endonuclease activity and (3) promoting the release of Pol II from bound DNA. The integrator complex is also involved in terminating the synthesis of non-coding Pol II transcripts, such as enhancer RNAs (eRNAs), small nuclear RNAs (snRNAs), telomerase RNAs and long non-coding RNAs (lncRNAs). INTS15 is part of the integrator tail module that acts as a platform for the recruitment of transcription factors at promoters. Within the integrator complex, INTS15 is required to bridge different integrator modules. This chain is Integrator complex subunit 15 (ints15), found in Danio rerio (Zebrafish).